The sequence spans 310 residues: Ribose-phosphate pyrophosphokinase (310 aa).

Residues 34-36 (DGE) and 93-94 (RQ) contribute to the ATP site. Residues H127 and D167 each contribute to the Mg(2+) site. The active site involves K190. Residues R192, D216, and 220–224 (DSGGT) contribute to the D-ribose 5-phosphate site.

The protein belongs to the ribose-phosphate pyrophosphokinase family. Class I subfamily. Homohexamer. Requires Mg(2+) as cofactor.

It is found in the cytoplasm. The catalysed reaction is D-ribose 5-phosphate + ATP = 5-phospho-alpha-D-ribose 1-diphosphate + AMP + H(+). It functions in the pathway metabolic intermediate biosynthesis; 5-phospho-alpha-D-ribose 1-diphosphate biosynthesis; 5-phospho-alpha-D-ribose 1-diphosphate from D-ribose 5-phosphate (route I): step 1/1. In terms of biological role, involved in the biosynthesis of the central metabolite phospho-alpha-D-ribosyl-1-pyrophosphate (PRPP) via the transfer of pyrophosphoryl group from ATP to 1-hydroxyl of ribose-5-phosphate (Rib-5-P). The sequence is that of Ribose-phosphate pyrophosphokinase from Maricaulis maris (strain MCS10) (Caulobacter maris).